The primary structure comprises 295 residues: RNA polymerase sigma-C factor (295 aa).

Positions Asp-73–Val-86 match the Polymerase core binding motif. Positions Leu-250 to Ile-269 form a DNA-binding region, H-T-H motif.

It belongs to the sigma-70 factor family.

Sigma factors are initiation factors that promote the attachment of RNA polymerase to specific initiation sites and are then released. This sigma factor is essential for normal fruiting body formation. This Myxococcus xanthus protein is RNA polymerase sigma-C factor (sigC).